We begin with the raw amino-acid sequence, 916 residues long: uncharacterized protein (916 aa).

This is an uncharacterized protein from Micromonas pusilla reovirus (isolate Netherlands/2005) (MpRV).